A 301-amino-acid polypeptide reads, in one-letter code: NDP-polyphosphate phosphotransferase 3 (301 aa).

The segment covering 1-12 (MNRNGSTKDPRR) has biased composition (basic and acidic residues). Positions 1–21 (MNRNGSTKDPRRMTGAATGEI) are disordered.

It belongs to the polyphosphate kinase 2 (PPK2) family. Class I subfamily. Mg(2+) serves as cofactor.

The catalysed reaction is [phosphate](n) + ATP = [phosphate](n+1) + ADP. It catalyses the reaction [phosphate](n) + CTP = [phosphate](n+1) + CDP. It carries out the reaction [phosphate](n) + GTP = [phosphate](n+1) + GDP. The enzyme catalyses [phosphate](n) + UTP = [phosphate](n+1) + UDP. In terms of biological role, uses inorganic polyphosphate (polyP) as a donor to convert NDP to NTP. PolyP hydrolysis is slightly faster with UDP, but it can also use ADP, GDP and CDP. This Ruegeria pomeroyi (strain ATCC 700808 / DSM 15171 / DSS-3) (Silicibacter pomeroyi) protein is NDP-polyphosphate phosphotransferase 3.